The sequence spans 74 residues: Cytochrome c oxidase copper chaperone 1 (74 aa).

The interval 1-30 is disordered; that stretch reads MTDQPAQNGLIPPPTSEPSKAAASAETKPK. Positions 34 and 35 each coordinate Cu cation. Positions 34–74 constitute a CHCH domain; that stretch reads CCACPDTKKLRDECIVEHGESACTKWIEAHKICLRAEGFNV. Short sequence motifs (cx9C motif) lie at residues 37-47 and 56-66; these read CPDTKKLRDEC and CTKWIEAHKIC. 2 disulfides stabilise this stretch: Cys-37/Cys-66 and Cys-47/Cys-56.

It belongs to the COX17 family.

The protein resides in the mitochondrion intermembrane space. Functionally, copper chaperone for cytochrome c oxidase (COX). Binds 2 copper ions and delivers them to the Cu(A) site of COX. Can complement the yeast mutant cox17. This chain is Cytochrome c oxidase copper chaperone 1 (COX17-1), found in Arabidopsis thaliana (Mouse-ear cress).